The primary structure comprises 1148 residues: Trafficking protein particle complex subunit 9 (1148 aa).

A phosphoserine mark is found at S566 and S953.

The protein belongs to the NIBP family. As to quaternary structure, component of the multisubunit TRAPP (transport protein particle) complex, which includes at least TRAPPC2, TRAPPC2L, TRAPPC3, TRAPPC3L, TRAPPC4, TRAPPC5, TRAPPC8, TRAPPC9, TRAPPC10, TRAPPC11 and TRAPPC12. Directly interacts with IKBKB and MAP3K14. Expressed in neurons of the pyramidal layer of the cortex, in spinal cord motor neurons and white matter neurons (at protein level).

It is found in the golgi apparatus. It localises to the cis-Golgi network. Its subcellular location is the endoplasmic reticulum. The protein localises to the cytoplasm. In terms of biological role, functions as an activator of NF-kappa-B through increased phosphorylation of the IKK complex. May function in neuronal cells differentiation. May play a role in vesicular transport from endoplasmic reticulum to Golgi. This is Trafficking protein particle complex subunit 9 (Trappc9) from Mus musculus (Mouse).